Consider the following 176-residue polypeptide: Large ribosomal subunit protein eL20A (176 aa).

This sequence belongs to the eukaryotic ribosomal protein eL20 family. Component of the large ribosomal subunit (LSU). Mature yeast ribosomes consist of a small (40S) and a large (60S) subunit. The 40S small subunit contains 1 molecule of ribosomal RNA (18S rRNA) and at least 33 different proteins. The large 60S subunit contains 3 rRNA molecules (25S, 5.8S and 5S rRNA) and at least 46 different proteins. eL20 forms multiple interactions with RNA and proteins in the central protuberance, connecting components of core functional centers that are located far apart.

Its subcellular location is the cytoplasm. In terms of biological role, component of the ribosome, a large ribonucleoprotein complex responsible for the synthesis of proteins in the cell. The small ribosomal subunit (SSU) binds messenger RNAs (mRNAs) and translates the encoded message by selecting cognate aminoacyl-transfer RNA (tRNA) molecules. The large subunit (LSU) contains the ribosomal catalytic site termed the peptidyl transferase center (PTC), which catalyzes the formation of peptide bonds, thereby polymerizing the amino acids delivered by tRNAs into a polypeptide chain. The nascent polypeptides leave the ribosome through a tunnel in the LSU and interact with protein factors that function in enzymatic processing, targeting, and the membrane insertion of nascent chains at the exit of the ribosomal tunnel. The sequence is that of Large ribosomal subunit protein eL20A (rpl2001) from Schizosaccharomyces pombe (strain 972 / ATCC 24843) (Fission yeast).